The following is a 179-amino-acid chain: Large ribosomal subunit protein uL5 (179 aa).

The protein belongs to the universal ribosomal protein uL5 family. In terms of assembly, part of the 50S ribosomal subunit; part of the 5S rRNA/L5/L18/L25 subcomplex. Contacts the 5S rRNA and the P site tRNA. Forms a bridge to the 30S subunit in the 70S ribosome.

In terms of biological role, this is one of the proteins that bind and probably mediate the attachment of the 5S RNA into the large ribosomal subunit, where it forms part of the central protuberance. In the 70S ribosome it contacts protein S13 of the 30S subunit (bridge B1b), connecting the 2 subunits; this bridge is implicated in subunit movement. Contacts the P site tRNA; the 5S rRNA and some of its associated proteins might help stabilize positioning of ribosome-bound tRNAs. This is Large ribosomal subunit protein uL5 from Shewanella piezotolerans (strain WP3 / JCM 13877).